Here is a 518-residue protein sequence, read N- to C-terminus: MASNDYTQQATQSYGAYPTQPGQGYSQQSSQPYGQQSYSGYGQSADTSGYGQSSYGSSYGQTQNTGYGTQSAPQGYGSTGGYGSSQSSQSSYGQQSSYPGYGQQPAPSSTSGSYGGSSQSSSYGQPQSGGYGQQSGYGGQQQSYGQQQSSYNPPQGYGQQNQYNSSSGGGGGGGGGNYGQDQSSMSGGGGGGGYGNQDQSGGGGGGYGGGQQDRGGRGRGGGGGYNRSSGGYEPRGRGGGRGGRGGMGGSDRGGFNKFGGPRDQGSRHDSEQDNSDNNTIFVQGLGENVTIESVADYFKQIGIIKTNKKTGQPMINLYTDRETGKLKGEATVSFDDPPSAKAAIDWFDGKEFSGNPIKVSFATRRADFNRGGGNGRGGRGRGGPMGRGGYGGGGSGGGGRGGFPSGGGGGGGQQRAGDWKCPNPTCENMNFSWRNECNQCKAPKPDGPGGGPGGSHMGGNYGDDRRGRGGYDRGGYRGRGGDRGGFRGGRGGGDRGGFGPGKMDSRGEHRQDRRERPY.

The segment covering 1–14 (MASNDYTQQATQSY) has biased composition (polar residues). The interval 1-279 (MASNDYTQQA…SEQDNSDNNT (279 aa)) is disordered. Composition is skewed to low complexity over residues 20–63 (QPGQ…GQTQ), 84–105 (SSQS…GQQP), and 116–126 (GSSQSSSYGQP). The span at 127 to 139 (QSGGYGQQSGYGG) shows a compositional bias: gly residues. The span at 140 to 166 (QQQSYGQQQSSYNPPQGYGQQNQYNSS) shows a compositional bias: low complexity. 2 stretches are compositionally biased toward gly residues: residues 167 to 178 (SGGGGGGGGGNY) and 186 to 225 (SGGG…GGGY). An asymmetric dimethylarginine; alternate mark is found at arginine 217 and arginine 219. An omega-N-methylarginine; alternate mark is found at arginine 217 and arginine 219. Arginine 235, arginine 237, arginine 241, arginine 244, and arginine 252 each carry asymmetric dimethylarginine. Over residues 237–252 (RGGGRGGRGGMGGSDR) the composition is skewed to gly residues. A Phosphoserine modification is found at serine 270. The region spanning 278 to 364 (NTIFVQGLGE…NPIKVSFATR (87 aa)) is the RRM domain. Position 279 is a phosphothreonine (threonine 279). Lysine 327 participates in a covalent cross-link: Glycyl lysine isopeptide (Lys-Gly) (interchain with G-Cter in SUMO2). Residue serine 333 is modified to Phosphoserine. 2 disordered regions span residues 368 to 417 (FNRG…QRAG) and 437 to 518 (CNQC…ERPY). Asymmetric dimethylarginine is present on residues arginine 370, arginine 376, arginine 379, arginine 381, and arginine 387. Residues 370-414 (RGGGNGRGGRGRGGPMGRGGYGGGGSGGGGRGGFPSGGGGGGGQQ) show a composition bias toward gly residues. Arginine 400 is subject to Asymmetric dimethylarginine; alternate. An Omega-N-methylarginine; alternate modification is found at arginine 400. The RanBP2-type zinc finger occupies 415–446 (RAGDWKCPNPTCENMNFSWRNECNQCKAPKPD). Residues 447-461 (GPGGGPGGSHMGGNY) show a composition bias toward gly residues. Residues 462-485 (GDDRRGRGGYDRGGYRGRGGDRGG) show a composition bias toward basic and acidic residues. Asymmetric dimethylarginine occurs at positions 466, 468, 473, 477, 479, 483, 487, and 490. Positions 486–500 (FRGGRGGGDRGGFGP) are enriched in gly residues. The residue at position 495 (arginine 495) is an Asymmetric dimethylarginine; alternate. Arginine 495 bears the Omega-N-methylarginine; alternate mark. The segment covering 503-518 (MDSRGEHRQDRRERPY) has biased composition (basic and acidic residues).

The protein belongs to the RRM TET family. As to quaternary structure, self-oligomerizes (via N-terminal region). Oligomerization is essential for chromatin binding. Component of nuclear riboprotein complexes. Interacts with ILF3, TDRD3 and SF1. Interacts through its C-terminus with SFRS13A. Interacts with OTUB1 and SARNP. Interacts with LRSAM1. Interacts with SAFB1 in a DNA-dependent manner; this interaction tethers FUS to chromatin. Interacts with MATR3. Interacts with SNRNP70 and POLR2A; these interactions couple RNA transcription and splicing. Interacts (through its RNA-binding domain) with RALY (through its RNA-binding domain); both are components of the same RNPs. Phosphorylated in its N-terminal serine residues upon induced DNA damage. ATM and DNA-PK are able to phosphorylate FUS N-terminal region.

It localises to the nucleus. Functionally, DNA/RNA-binding protein that plays a role in various cellular processes such as transcription regulation, RNA splicing, RNA transport, DNA repair and damage response. Binds to ssRNA containing the consensus sequence 5'-AGGUAA-3'. Binds to nascent pre-mRNAs and acts as a molecular mediator between RNA polymerase II and U1 small nuclear ribonucleoprotein thereby coupling transcription and splicing. Also binds its own pre-mRNA and autoregulates its expression; this autoregulation mechanism is mediated by non-sense-mediated decay. Plays a role in DNA repair mechanisms by promoting D-loop formation and homologous recombination during DNA double-strand break repair. In neuronal cells, plays crucial roles in dendritic spine formation and stability, RNA transport, mRNA stability and synaptic homeostasis. This is RNA-binding protein FUS (Fus) from Mus musculus (Mouse).